A 485-amino-acid polypeptide reads, in one-letter code: Glutamyl-tRNA(Gln) amidotransferase subunit A (485 aa).

Residues Lys-78 and Ser-153 each act as charge relay system in the active site. Catalysis depends on Ser-177, which acts as the Acyl-ester intermediate.

The protein belongs to the amidase family. GatA subfamily. As to quaternary structure, heterotrimer of A, B and C subunits.

The catalysed reaction is L-glutamyl-tRNA(Gln) + L-glutamine + ATP + H2O = L-glutaminyl-tRNA(Gln) + L-glutamate + ADP + phosphate + H(+). Functionally, allows the formation of correctly charged Gln-tRNA(Gln) through the transamidation of misacylated Glu-tRNA(Gln) in organisms which lack glutaminyl-tRNA synthetase. The reaction takes place in the presence of glutamine and ATP through an activated gamma-phospho-Glu-tRNA(Gln). This Bacillus cereus (strain ATCC 10987 / NRS 248) protein is Glutamyl-tRNA(Gln) amidotransferase subunit A.